The primary structure comprises 491 residues: Aspartyl/glutamyl-tRNA(Asn/Gln) amidotransferase subunit B (491 aa).

The protein belongs to the GatB/GatE family. GatB subfamily. In terms of assembly, heterotrimer of A, B and C subunits.

It carries out the reaction L-glutamyl-tRNA(Gln) + L-glutamine + ATP + H2O = L-glutaminyl-tRNA(Gln) + L-glutamate + ADP + phosphate + H(+). The enzyme catalyses L-aspartyl-tRNA(Asn) + L-glutamine + ATP + H2O = L-asparaginyl-tRNA(Asn) + L-glutamate + ADP + phosphate + 2 H(+). Functionally, allows the formation of correctly charged Asn-tRNA(Asn) or Gln-tRNA(Gln) through the transamidation of misacylated Asp-tRNA(Asn) or Glu-tRNA(Gln) in organisms which lack either or both of asparaginyl-tRNA or glutaminyl-tRNA synthetases. The reaction takes place in the presence of glutamine and ATP through an activated phospho-Asp-tRNA(Asn) or phospho-Glu-tRNA(Gln). The sequence is that of Aspartyl/glutamyl-tRNA(Asn/Gln) amidotransferase subunit B from Burkholderia cenocepacia (strain ATCC BAA-245 / DSM 16553 / LMG 16656 / NCTC 13227 / J2315 / CF5610) (Burkholderia cepacia (strain J2315)).